The primary structure comprises 35 residues: Leukocyte cysteine proteinase inhibitor 2 (35 aa).

The interval Leu1–Asp35 is disordered. Positions Pro24–Asp35 are enriched in basic and acidic residues.

It belongs to the cystatin family.

It is found in the cytoplasm. Potent inhibitor of cathepsins L and S, and papain. The polypeptide is Leukocyte cysteine proteinase inhibitor 2 (Sus scrofa (Pig)).